The following is a 71-amino-acid chain: 26S proteasome complex subunit rpn15 (71 aa).

The tract at residues 1–38 (MSRAALPSLENLEDDDEFEDFATENWPMKDTELDTGDD) is disordered. Residues 11 to 22 (NLEDDDEFEDFA) are compositionally biased toward acidic residues. The UBS-II stretch occupies residues 16–25 (DEFEDFATEN). The tract at residues 38–49 (DTLWENNWDDED) is UBS-I.

This sequence belongs to the DSS1/SEM1 family. In terms of assembly, interacts with mlo3, rae1, nup98/nup189 and nup146. Interacts with rad24. Interacts (via UBSs) with ubiquitin (ubi3/ubi5).

The protein localises to the cytoplasm. Its subcellular location is the nucleus. In terms of biological role, versatile protein that might stabilize multiple protein complexes involved in diverse pathways. Subunit of the 26S proteasome which plays a role in ubiquitin-dependent proteolysis. Acts as a ubiquitin receptor of the 26S proteasome, by interacting with ubiquitin chains linked by 'Lys-63' and 'Lys-48'. Involved in nuclear export of specific sets of mRNAs. Links the mRNA adapter mlo3 to rae1 for targeting mRNA-protein complex to the proteins of the nucleoporin complex (NPC). Involved in recombinational repair of DNA. Plays a critical role in linking repair and checkpoint factors to damaged DNA sites by specifically recruiting rad24 and cdc25 to the DSBs. The protein is 26S proteasome complex subunit rpn15 (rpn15) of Schizosaccharomyces pombe (strain 972 / ATCC 24843) (Fission yeast).